A 528-amino-acid polypeptide reads, in one-letter code: Tyrosine--tRNA ligase, cytoplasmic (528 aa).

Met-1 carries the N-acetylmethionine modification. An N-acetylglycine; in Tyrosine--tRNA ligase, cytoplasmic, N-terminally processed modification is found at Gly-2. Residue Tyr-39 coordinates L-tyrosine. Tyr-39 is a trans-resveratrol binding site. The 'HIGH' region signature appears at Thr-44–Tyr-52. Residues Tyr-166, Gln-170, Asp-173, and Gln-188 each coordinate L-tyrosine. Residues Gln-170 and Asp-173 each contribute to the trans-resveratrol site. An N6-acetyllysine modification is found at Lys-197. The residue at position 205 (Ser-205) is a Phosphoserine. Lys-206 is subject to N6-acetyllysine. A 'KMSKS' region motif is present at residues Lys-222 to Ser-226. A Nuclear localization signal motif is present at residues Lys-242–Lys-247. The disordered stretch occupies residues Ala-339 to Val-363. Positions Ile-364–Phe-468 constitute a tRNA-binding domain. Ser-386 carries the post-translational modification Phosphoserine. Residues Lys-474, Lys-482, and Lys-490 each carry the N6-acetyllysine modification.

Belongs to the class-I aminoacyl-tRNA synthetase family. Homodimer. Interacts (when binding to resveratrol) with PARP1; interaction stimulates the poly-ADP-ribosyltransferase activity of PARP1.

The protein resides in the cytoplasm. The protein localises to the nucleus. It carries out the reaction tRNA(Tyr) + L-tyrosine + ATP = L-tyrosyl-tRNA(Tyr) + AMP + diphosphate + H(+). Its activity is regulated as follows. Resveratrol strongly inhibits the tyrosine--tRNA ligase activity. Functionally, tyrosine--tRNA ligase that catalyzes the attachment of tyrosine to tRNA(Tyr) in a two-step reaction: tyrosine is first activated by ATP to form Tyr-AMP and then transferred to the acceptor end of tRNA(Tyr). Also acts as a positive regulator of poly-ADP-ribosylation in the nucleus, independently of its tyrosine--tRNA ligase activity. Activity is switched upon resveratrol-binding: resveratrol strongly inhibits the tyrosine--tRNA ligase activity and promotes relocalization to the nucleus, where YARS1 specifically stimulates the poly-ADP-ribosyltransferase activity of PARP1. In Homo sapiens (Human), this protein is Tyrosine--tRNA ligase, cytoplasmic.